We begin with the raw amino-acid sequence, 146 residues long: Large ribosomal subunit protein bL21 (146 aa).

Residues 95–104 (PKKKTRRKMG) show a composition bias toward basic residues. The interval 95-146 (PKKKTRRKMGHRQELTRVMVKSISISKSTPKSSPKTEATKKSTSSKASKPEN) is disordered. A compositionally biased stretch (low complexity) spans 115–146 (KSISISKSTPKSSPKTEATKKSTSSKASKPEN).

The protein belongs to the bacterial ribosomal protein bL21 family. As to quaternary structure, part of the 50S ribosomal subunit. Contacts protein L20.

Its function is as follows. This protein binds to 23S rRNA in the presence of protein L20. The protein is Large ribosomal subunit protein bL21 of Prochlorococcus marinus (strain MIT 9515).